A 655-amino-acid polypeptide reads, in one-letter code: p-hydroxybenzoic acid efflux pump subunit AaeB (655 aa).

Transmembrane regions (helical) follow at residues 13 to 33 (FAVK…HFQL), 38 to 58 (WAVL…GGEP), 69 to 89 (LRII…IAMI), 93 to 113 (LLMI…SSLV), 121 to 141 (WGLA…EPLL), 152 to 172 (EIVI…PRSI), 370 to 390 (LFWL…IAVV), 407 to 427 (FIYG…VIIP), 431 to 451 (QSML…GIEV), 459 to 479 (MGAL…TFHF), and 482 to 502 (FLDS…VILL).

It belongs to the aromatic acid exporter ArAE (TC 2.A.85) family.

Its subcellular location is the cell inner membrane. Forms an efflux pump with AaeA. Could function as a metabolic relief valve, allowing to eliminate certain compounds when they accumulate to high levels in the cell. This is p-hydroxybenzoic acid efflux pump subunit AaeB from Shigella boydii serotype 18 (strain CDC 3083-94 / BS512).